The following is a 1244-amino-acid chain: SWI/SNF chromatin remodeling complex subunit swsn-7 (1244 aa).

One can recognise an ARID domain in the interval 24 to 116; it reads QRKMAEFYNS…YLSKFEQVET (93 aa). Residues 486–496 show a composition bias toward polar residues; that stretch reads FTQGSNQQQNP. Disordered regions lie at residues 486–534, 556–583, and 597–619; these read FTQG…GAAP, NREQ…ILAH, and DRRT…ESQL. Residues 497–508 show a composition bias toward low complexity; sequence HHSQGGHQLGHS. A compositionally biased stretch (polar residues) spans 556-566; it reads NREQYSTQSSQ. The segment covering 567–578 has biased composition (pro residues); that stretch reads PHPPHTNVPPSP. Residues 610–619 show a composition bias toward polar residues; sequence PSTNSGESQL. Positions 623-697 form a DNA-binding region, RFX-type winged-helix; that stretch reads TEKWIRQNCV…IVAQGIRLIR (75 aa). Positions 1134-1244 are disordered; that stretch reads EEEQQKMLSE…TTPVRAGAGI (111 aa). Over residues 1142 to 1158 the composition is skewed to low complexity; the sequence is SEVPSSASLSSMAGSSS. 2 stretches are compositionally biased toward polar residues: residues 1159–1186 and 1194–1212; these read QLPT…SNKP and LNFS…FTAG. The segment covering 1220-1231 has biased composition (low complexity); sequence PIQQHIPSQPSP.

Component of the SWI/SNF-B (PBAF) chromatin remodeling complex.

It is found in the nucleus. In terms of biological role, involved in transcriptional activation and repression of select genes by chromatin remodeling (alteration of DNA-nucleosome topology). Required for the stability of the SWI/SNF chromatin remodeling complex SWI/SNF-B (PBAF). Required for regulation of a stress response gene network, probably as part of the PBAF complex and perhaps acting in concert with histone demethylase jmjc-1. Binds to the ethanol and stress response elements (ESRE) in the promoter regions of hsp-16.1 and hsp-16.2, probably as part of the PBAF complex. This is SWI/SNF chromatin remodeling complex subunit swsn-7 from Caenorhabditis elegans.